A 237-amino-acid chain; its full sequence is Endonuclease V (237 aa).

Mg(2+)-binding residues include aspartate 46 and aspartate 114.

This sequence belongs to the endonuclease V family. The cofactor is Mg(2+).

The protein localises to the cytoplasm. It catalyses the reaction Endonucleolytic cleavage at apurinic or apyrimidinic sites to products with a 5'-phosphate.. Its function is as follows. DNA repair enzyme involved in the repair of deaminated bases. Selectively cleaves double-stranded DNA at the second phosphodiester bond 3' to a deoxyinosine leaving behind the intact lesion on the nicked DNA. The polypeptide is Endonuclease V (Xanthomonas axonopodis pv. citri (strain 306)).